The primary structure comprises 2098 residues: Unconventional myosin heavy chain 6 (2098 aa).

The region spanning glutamine 62 to tyrosine 732 is the Myosin motor domain. Position 155-162 (glycine 155–threonine 162) interacts with ATP. Actin-binding regions lie at residues leucine 609–glutamate 631 and glutamine 711–leucine 725. 3 consecutive IQ domains span residues leucine 735–lysine 757, glutamine 758–arginine 787, and leucine 804–lysine 833. Positions phenylalanine 860–proline 898 are disordered. Positions histidine 929–lysine 1168 constitute a MyTH4 1 domain. The Ras-associating domain maps to lysine 1171 to serine 1211. Residues valine 1173–serine 1481 form the FERM 1 domain. Residues lysine 1479 to threonine 1547 form the SH3 domain. The 149-residue stretch at phenylalanine 1624–glutamine 1772 folds into the MyTH4 2 domain. The FERM 2 domain occupies isoleucine 1778–glutamine 2086.

Belongs to the TRAFAC class myosin-kinesin ATPase superfamily. Myosin family. In terms of assembly, interacts with unc-98.

It localises to the cytoplasm. Myosins are actin-based motor molecules with ATPase activity. Unconventional myosins serve in intracellular movements. Their highly divergent tails are presumed to bind to membranous compartments, which would be moved relative to actin filaments. The chain is Unconventional myosin heavy chain 6 from Caenorhabditis elegans.